Here is a 529-residue protein sequence, read N- to C-terminus: Lysine--tRNA ligase (529 aa).

The 'HIGH' region signature appears at Ile29–Asn37. The short motif at Ala274–Ser278 is the 'KMSKS' region element. Lys277 is an ATP binding site.

This sequence belongs to the class-I aminoacyl-tRNA synthetase family.

The protein localises to the cytoplasm. The catalysed reaction is tRNA(Lys) + L-lysine + ATP = L-lysyl-tRNA(Lys) + AMP + diphosphate. The sequence is that of Lysine--tRNA ligase from Methanosphaera stadtmanae (strain ATCC 43021 / DSM 3091 / JCM 11832 / MCB-3).